A 150-amino-acid chain; its full sequence is 2-aminobenzenesulfonate 2,3-dioxygenase subunit beta (150 aa).

The protein belongs to the bacterial ring-hydroxylating dioxygenase beta subunit family. In terms of assembly, heterotetramer with a alpha2beta2 structure.

The catalysed reaction is 2-aminobenzenesulfonate + NADH + O2 + 2 H(+) = 2,3-dihydroxybenzenesulfonate + NH4(+) + NAD(+). Its activity is regulated as follows. Inhibited by o-phenanthroline. Its function is as follows. Beta subunit of the oxygenase component of the 2-aminobenzenesulfonate 2,3-dioxygenase system (deaminating) (ABSDOS). Can use 2-aminobenzenesulfonate (ABS), benzenesulfonate (BS), 4-toluenesulfonate (TS), 2-nitrobenzenesulfonate, 3- and 4-aminobenzenesulfonates, 4-chloro- and 4-hydroxybenzenesulfonates and pyridine-3-sulfonate as substrates. No desulfonation of ABS to aminocatechol or aminophenol detected. This is 2-aminobenzenesulfonate 2,3-dioxygenase subunit beta from Alcaligenes sp.